The sequence spans 217 residues: Phosphoribosylformylglycinamidine synthase subunit PurQ (217 aa).

The 216-residue stretch at 2 to 217 (NIGIIVFPGS…GKSILSTLLS (216 aa)) folds into the Glutamine amidotransferase type-1 domain. The Nucleophile role is filled by Cys86. Residues His194 and Glu196 contribute to the active site.

In terms of assembly, part of the FGAM synthase complex composed of 1 PurL, 1 PurQ and 2 PurS subunits.

It is found in the cytoplasm. The enzyme catalyses N(2)-formyl-N(1)-(5-phospho-beta-D-ribosyl)glycinamide + L-glutamine + ATP + H2O = 2-formamido-N(1)-(5-O-phospho-beta-D-ribosyl)acetamidine + L-glutamate + ADP + phosphate + H(+). The catalysed reaction is L-glutamine + H2O = L-glutamate + NH4(+). It participates in purine metabolism; IMP biosynthesis via de novo pathway; 5-amino-1-(5-phospho-D-ribosyl)imidazole from N(2)-formyl-N(1)-(5-phospho-D-ribosyl)glycinamide: step 1/2. Part of the phosphoribosylformylglycinamidine synthase complex involved in the purines biosynthetic pathway. Catalyzes the ATP-dependent conversion of formylglycinamide ribonucleotide (FGAR) and glutamine to yield formylglycinamidine ribonucleotide (FGAM) and glutamate. The FGAM synthase complex is composed of three subunits. PurQ produces an ammonia molecule by converting glutamine to glutamate. PurL transfers the ammonia molecule to FGAR to form FGAM in an ATP-dependent manner. PurS interacts with PurQ and PurL and is thought to assist in the transfer of the ammonia molecule from PurQ to PurL. This is Phosphoribosylformylglycinamidine synthase subunit PurQ from Prochlorococcus marinus (strain NATL2A).